Reading from the N-terminus, the 464-residue chain is Alpha-1,6-mannosyl-glycoprotein 4-beta-N-acetylglucosaminyltransferase (464 aa).

The Cytoplasmic segment spans residues 1-10 (MRCSPKRSLT). Residues 11 to 31 (AVIAASFLLLLLLLLLHRGSW) traverse the membrane as a helical; Signal-anchor for type II membrane protein segment. Topologically, residues 32–464 (QDPQEVQFRD…QSIGIWTAGT (433 aa)) are lumenal. N-linked (GlcNAc...) asparagine glycosylation is found at Asn70 and Asn201.

The protein belongs to the glycosyltransferase 54 family. Requires a divalent metal cation as cofactor. In terms of tissue distribution, highly expressed in oviduct, spleen, lung and colon.

The protein localises to the golgi apparatus membrane. It carries out the reaction N(4)-{beta-D-GlcNAc-(1-&gt;2)-[beta-D-GlcNAc-(1-&gt;4)]-alpha-D-Man-(1-&gt;3)-[beta-D-GlcNAc-(1-&gt;2)-[beta-D-GlcNAc-(1-&gt;6)]-alpha-D-Man-(1-&gt;6)]-beta-D-Man-(1-&gt;4)-beta-D-GlcNAc-(1-&gt;4)-beta-D-GlcNAc}-L-asparaginyl-[protein] + UDP-N-acetyl-alpha-D-glucosamine = N(4)-{beta-D-GlcNAc-(1-&gt;2)-[beta-D-GlcNAc-(1-&gt;4)]-alpha-D-Man-(1-&gt;3)-[beta-D-GlcNAc-(1-&gt;2)-[beta-D-GlcNAc-(1-&gt;4)]-[beta-D-GlcNAc-(1-&gt;6)]-alpha-D-Man-(1-&gt;6)]-beta-D-Man-(1-&gt;4)-beta-D-GlcNAc-(1-&gt;4)-beta-D-GlcNAc}-L-asparaginyl-[protein] + UDP + H(+). It functions in the pathway protein modification; protein glycosylation. Its function is as follows. Glycosyltransferase that catalyzes the transfer of GlcNAc to the Manalpha1-6 arm to form GlcNAcBeta1-4Manalpha1-6 linkage (also named 'GnT-VI' activity). May also participate in the transfer of N-acetylglucosamine (GlcNAc) to the core mannose residues of N-linked glycans by catalyzing the formation of the GlcNAcbeta1-4 branch on the GlcNAcbeta1-2Manalpha1-3 arm of the core structure of N-linked glycans. This chain is Alpha-1,6-mannosyl-glycoprotein 4-beta-N-acetylglucosaminyltransferase (MGAT4C), found in Gallus gallus (Chicken).